The sequence spans 187 residues: Frataxin, mitochondrial (187 aa).

Belongs to the frataxin family. Monomer. Oligomer. Interacts with NIFS1.

It localises to the mitochondrion. The enzyme catalyses 4 Fe(2+) + O2 + 4 H(+) = 4 Fe(3+) + 2 H2O. Functionally, promotes the biosynthesis of heme as well as the assembly and repair of iron-sulfur clusters by delivering Fe(2+) to proteins involved in these pathways. May play a role in the protection against iron-catalyzed oxidative stress through its ability to catalyze the oxidation of Fe(2+) to Fe(3+). May be able to store large amounts of the metal in the form of a ferrihydrite mineral by oligomerization. Binds to the mitochondrial cysteine desulfurase NIFS1 and increases its activity. The protein is Frataxin, mitochondrial (FH) of Arabidopsis thaliana (Mouse-ear cress).